The primary structure comprises 382 residues: Leucoanthocyanidin reductase (382 aa).

NADP(+) is bound by residues 19-25, Arg44, and Lys52; that span reads GGTGFIG. Lys142 (proton acceptor) is an active-site residue. Arg146 contacts NADP(+).

It belongs to the NmrA-type oxidoreductase family. Isoflavone reductase subfamily. As to quaternary structure, monomer.

It carries out the reaction (2R,3S)-catechin + NADP(+) + H2O = (2R,3S,4S)-leucocyanidin + NADPH + H(+). The protein operates within flavonoid metabolism; proanthocyanidin biosynthesis. Its function is as follows. Catalyzes the synthesis of catechin from 3,4-cis-leucocyanidin. Also synthesizes afzelechin and gallocatechin. The protein is Leucoanthocyanidin reductase (LAR) of Desmodium uncinatum (Silverleaf Spanish clover).